Consider the following 268-residue polypeptide: Thiazole synthase (268 aa).

The active-site Schiff-base intermediate with DXP is Lys-100. 1-deoxy-D-xylulose 5-phosphate is bound by residues Gly-161, 187-188, and 209-210; these read AG and NT. The segment at 248 to 268 is disordered; that stretch reads ATPSSPSEGMITGSPHSAANN.

It belongs to the ThiG family. In terms of assembly, homotetramer. Forms heterodimers with either ThiH or ThiS.

The protein resides in the cytoplasm. The catalysed reaction is [ThiS sulfur-carrier protein]-C-terminal-Gly-aminoethanethioate + 2-iminoacetate + 1-deoxy-D-xylulose 5-phosphate = [ThiS sulfur-carrier protein]-C-terminal Gly-Gly + 2-[(2R,5Z)-2-carboxy-4-methylthiazol-5(2H)-ylidene]ethyl phosphate + 2 H2O + H(+). It functions in the pathway cofactor biosynthesis; thiamine diphosphate biosynthesis. Its function is as follows. Catalyzes the rearrangement of 1-deoxy-D-xylulose 5-phosphate (DXP) to produce the thiazole phosphate moiety of thiamine. Sulfur is provided by the thiocarboxylate moiety of the carrier protein ThiS. In vitro, sulfur can be provided by H(2)S. This Nitrosomonas eutropha (strain DSM 101675 / C91 / Nm57) protein is Thiazole synthase.